We begin with the raw amino-acid sequence, 205 residues long: Small ribosomal subunit protein uS4 (205 aa).

One can recognise an S4 RNA-binding domain in the interval 94 to 157 (SRLDTVVYRM…QQIPLIQESI (64 aa)).

The protein belongs to the universal ribosomal protein uS4 family. In terms of assembly, part of the 30S ribosomal subunit. Contacts protein S5. The interaction surface between S4 and S5 is involved in control of translational fidelity.

In terms of biological role, one of the primary rRNA binding proteins, it binds directly to 16S rRNA where it nucleates assembly of the body of the 30S subunit. Its function is as follows. With S5 and S12 plays an important role in translational accuracy. In Rickettsia prowazekii (strain Madrid E), this protein is Small ribosomal subunit protein uS4.